The following is a 260-amino-acid chain: NAD-capped RNA hydrolase NudC (260 aa).

Arginine 69 contacts substrate. The Zn(2+) site is built by cysteine 98 and cysteine 101. Glutamate 111 contacts substrate. Cysteine 116 and cysteine 119 together coordinate Zn(2+). Tyrosine 124 is a binding site for substrate. The region spanning proline 125–threonine 248 is the Nudix hydrolase domain. The a divalent metal cation site is built by alanine 158, glutamate 174, and glutamate 178. Positions glycine 159 to glutamine 180 match the Nudix box motif. Glutamine 192–serine 199 provides a ligand contact to substrate. Residue glutamate 219 participates in a divalent metal cation binding. Alanine 241 is a binding site for substrate.

Belongs to the Nudix hydrolase family. NudC subfamily. Homodimer. The cofactor is Mg(2+). Requires Mn(2+) as cofactor. It depends on Zn(2+) as a cofactor.

The enzyme catalyses a 5'-end NAD(+)-phospho-ribonucleoside in mRNA + H2O = a 5'-end phospho-adenosine-phospho-ribonucleoside in mRNA + beta-nicotinamide D-ribonucleotide + 2 H(+). It catalyses the reaction NAD(+) + H2O = beta-nicotinamide D-ribonucleotide + AMP + 2 H(+). It carries out the reaction NADH + H2O = reduced beta-nicotinamide D-ribonucleotide + AMP + 2 H(+). Its function is as follows. mRNA decapping enzyme that specifically removes the nicotinamide adenine dinucleotide (NAD) cap from a subset of mRNAs by hydrolyzing the diphosphate linkage to produce nicotinamide mononucleotide (NMN) and 5' monophosphate mRNA. The NAD-cap is present at the 5'-end of some mRNAs and stabilizes RNA against 5'-processing. Has preference for mRNAs with a 5'-end purine. Catalyzes the hydrolysis of a broad range of dinucleotide pyrophosphates. In Pectobacterium atrosepticum (strain SCRI 1043 / ATCC BAA-672) (Erwinia carotovora subsp. atroseptica), this protein is NAD-capped RNA hydrolase NudC.